A 173-amino-acid chain; its full sequence is Crossover junction endodeoxyribonuclease RuvC (173 aa).

Catalysis depends on residues Asp-11, Glu-71, and Asp-143. Positions 11, 71, and 143 each coordinate Mg(2+).

This sequence belongs to the RuvC family. In terms of assembly, homodimer which binds Holliday junction (HJ) DNA. The HJ becomes 2-fold symmetrical on binding to RuvC with unstacked arms; it has a different conformation from HJ DNA in complex with RuvA. In the full resolvosome a probable DNA-RuvA(4)-RuvB(12)-RuvC(2) complex forms which resolves the HJ. It depends on Mg(2+) as a cofactor.

The protein localises to the cytoplasm. The catalysed reaction is Endonucleolytic cleavage at a junction such as a reciprocal single-stranded crossover between two homologous DNA duplexes (Holliday junction).. The RuvA-RuvB-RuvC complex processes Holliday junction (HJ) DNA during genetic recombination and DNA repair. Endonuclease that resolves HJ intermediates. Cleaves cruciform DNA by making single-stranded nicks across the HJ at symmetrical positions within the homologous arms, yielding a 5'-phosphate and a 3'-hydroxyl group; requires a central core of homology in the junction. The consensus cleavage sequence is 5'-(A/T)TT(C/G)-3'. Cleavage occurs on the 3'-side of the TT dinucleotide at the point of strand exchange. HJ branch migration catalyzed by RuvA-RuvB allows RuvC to scan DNA until it finds its consensus sequence, where it cleaves and resolves the cruciform DNA. This is Crossover junction endodeoxyribonuclease RuvC from Brucella suis (strain ATCC 23445 / NCTC 10510).